The sequence spans 90 residues: Probable Fe(2+)-trafficking protein (90 aa).

This sequence belongs to the Fe(2+)-trafficking protein family.

Functionally, could be a mediator in iron transactions between iron acquisition and iron-requiring processes, such as synthesis and/or repair of Fe-S clusters in biosynthetic enzymes. In Verminephrobacter eiseniae (strain EF01-2), this protein is Probable Fe(2+)-trafficking protein.